The sequence spans 368 residues: Cyclin-dependent kinase 2 (368 aa).

The Protein kinase domain occupies 45-330; the sequence is FCSLRRIGEG…AKGALSHRYF (286 aa). Residues 51–59 and lysine 74 each bind ATP; that span reads IGEGTYGVV. Aspartate 170 acts as the Proton acceptor in catalysis. Mg(2+)-binding residues include asparagine 175 and aspartate 188.

Belongs to the protein kinase superfamily. CMGC Ser/Thr protein kinase family. CDC2/CDKX subfamily. Interacts with cye-1; the interaction likely regulates cdk-2 activity and is probably required for gld-1 phosphorylation. Requires Mg(2+) as cofactor.

It catalyses the reaction L-seryl-[protein] + ATP = O-phospho-L-seryl-[protein] + ADP + H(+). The catalysed reaction is L-threonyl-[protein] + ATP = O-phospho-L-threonyl-[protein] + ADP + H(+). In terms of biological role, serine/threonine-protein kinase which, in association with cye-1, regulates proliferation, quiescent state and cell fate during the development of several cell lineages. In the embryo, initiates the establishment of cell polarity through the recruitment of the centrosomal proteins spd-2 and spd-5 during prophase. Phosphorylation and inhibition of the translational repressor gld-1 by the cdk-2/cye-1 complex regulates the pool of germline stem cells and the size of the mitotic zone in the gonads by preventing entry into meiosis. The polypeptide is Cyclin-dependent kinase 2 (Caenorhabditis elegans).